A 251-amino-acid chain; its full sequence is Adenosylcobinamide-GDP ribazoletransferase (251 aa).

The next 5 membrane-spanning stretches (helical) occupy residues 44-64 (LVGL…LLAG), 114-134 (IGAF…VLAH), 143-163 (GALV…AACV), 177-197 (AGAT…TGVA), and 198-218 (LAGP…VVWL).

It belongs to the CobS family. Mg(2+) serves as cofactor.

The protein resides in the cell inner membrane. It carries out the reaction alpha-ribazole + adenosylcob(III)inamide-GDP = adenosylcob(III)alamin + GMP + H(+). It catalyses the reaction alpha-ribazole 5'-phosphate + adenosylcob(III)inamide-GDP = adenosylcob(III)alamin 5'-phosphate + GMP + H(+). It participates in cofactor biosynthesis; adenosylcobalamin biosynthesis; adenosylcobalamin from cob(II)yrinate a,c-diamide: step 7/7. Functionally, joins adenosylcobinamide-GDP and alpha-ribazole to generate adenosylcobalamin (Ado-cobalamin). Also synthesizes adenosylcobalamin 5'-phosphate from adenosylcobinamide-GDP and alpha-ribazole 5'-phosphate. The chain is Adenosylcobinamide-GDP ribazoletransferase from Nitratidesulfovibrio vulgaris (strain DSM 19637 / Miyazaki F) (Desulfovibrio vulgaris).